The primary structure comprises 670 residues: Solute carrier organic anion transporter family member 1A5 (670 aa).

Residues 1–20 (MGETEKRIATHGVRCFSKIK) lie on the Cytoplasmic side of the membrane. Residues 21–40 (MFLLALTCAYVSKSLSGIYM) traverse the membrane as a helical segment. Residues 41 to 59 (NSMLTQIERQFDIPTSIVG) are Extracellular-facing. A helical membrane pass occupies residues 60–80 (LINGSFEIGNLLLIILVSYFG). The Cytoplasmic portion of the chain corresponds to 81-86 (TKLHRP). The helical transmembrane segment at 87 to 111 (IMIGIGCVIMGLGCFLMSLPHFLMG) threads the bilayer. Over 112–155 (RYEYETTISPTSNLSSNSFLCMENRTQTLKPTQDPAECVKEMKS) the chain is Extracellular. Residues asparagine 124 and asparagine 135 are each glycosylated (N-linked (GlcNAc...) asparagine). The chain crosses the membrane as a helical span at residues 156–184 (LMWIYVLVGNIIRGIGETPIMPLGISYIE). Residues 185-203 (DFAKSENSPLYIGILESGK) lie on the Cytoplasmic side of the membrane. The helical transmembrane segment at 204-224 (MIGPIVGLLLGSFCARIYVDT) threads the bilayer. Topologically, residues 225 to 242 (GSVNTDDLTITPTDTRWV) are extracellular. A helical transmembrane segment spans residues 243 to 267 (GAWWIGFLVCAGVNILTSIPFFFFP). The Cytoplasmic portion of the chain corresponds to 268–311 (KTLPKEGLQDNVARTENDKEEKHREKAKEENRGITKDFLPFMKS). A helical membrane pass occupies residues 312–333 (LSCNPIYMLLILTSVLQINAFI). The Extracellular segment spans residues 334–353 (NMFTFLPKYLEQQYGKSTSE). A helical membrane pass occupies residues 354 to 377 (VVLLIGVCNLPPICIGYLLIGFIM). Residues 378 to 381 (KKFR) are Cytoplasmic-facing. A helical membrane pass occupies residues 382-405 (ITVKKAAYMAFCLSLFEYLLSYFH). Topologically, residues 406–513 (FMISCDNFQV…PECANKLQYF (108 aa)) are extracellular. One can recognise a Kazal-like domain in the interval 433–488 (NKVLADCNTRCSCLTNTWDPVCGDNGLSYMSACLAGCEKSVGMGTHMVFQNCSCIQ). Cystine bridges form between cysteine 439-cysteine 469, cysteine 445-cysteine 465, and cysteine 454-cysteine 486. N-linked (GlcNAc...) asparagine glycans are attached at residues asparagine 483 and asparagine 492. The chain crosses the membrane as a helical span at residues 514–536 (LIMSVIGSFIYSITAIPGYMVLL). Residues 537-545 (RCIKSEEKS) are Cytoplasmic-facing. Residues 546-571 (LGIGLHAFCTRIFAGIPAPIYFGALI) traverse the membrane as a helical segment. Residues 572–605 (DRTCLHWGTLKCGEPGACRIYNINNFRRIYLVLP) are Extracellular-facing. Residues 606–623 (AALRGSSYLPAFFILILM) traverse the membrane as a helical segment. Residues 624 to 670 (RKFQLPGEMYSSETELADMKQTVKKSECTDVHGIPKVENDGELKTKL) lie on the Cytoplasmic side of the membrane.

The protein belongs to the organo anion transporter (TC 2.A.60) family. In terms of tissue distribution, expressed in brain, choroid plexus and lung, but not in liver or kidney.

It is found in the cell membrane. Its subcellular location is the basal cell membrane. The catalysed reaction is taurocholate(out) = taurocholate(in). It carries out the reaction glycocholate(out) = glycocholate(in). It catalyses the reaction taurochenodeoxycholate(out) = taurochenodeoxycholate(in). The enzyme catalyses tauroursodeoxycholate(out) = tauroursodeoxycholate(in). The catalysed reaction is 3,3',5'-triiodo-L-thyronine(out) = 3,3',5'-triiodo-L-thyronine(in). It carries out the reaction L-thyroxine(out) = L-thyroxine(in). It catalyses the reaction taurodeoxycholate(out) = taurodeoxycholate(in). The enzyme catalyses glycodeoxycholate(out) = glycodeoxycholate(in). The catalysed reaction is glycochenodeoxycholate(out) = glycochenodeoxycholate(in). It carries out the reaction glycoursodeoxycholate(out) = glycoursodeoxycholate(in). It catalyses the reaction estrone 3-sulfate(out) = estrone 3-sulfate(in). The enzyme catalyses prostaglandin E2(out) = prostaglandin E2(in). The catalysed reaction is substance P(out) = substance P(in). Na(+)-independent transporter that mediates the cellular uptake of a broad range of organic anions such as the endogenous bile salts cholate and deoxycholate, either in their unconjugated or conjugated forms (taurocholate and glycocholate), estrone 3-sulfate and prostaglandin E2, at the plasma membrane. Responsible for intestinal absorption of bile acids. Capable of thyroid hormone transport (both T3 or 3,3',5'-triiodo-L-thyronine, and T4 or L-tyroxine). Plays roles in blood-brain and -cerebrospinal fluid barrier transport of organic anions and signal mediators, and in hormone uptake by neural cells. May also play a role in the reuptake of neuropeptides such as substance P/TAC1 and vasoactive intestinal peptide/VIP released from retinal neurons. Shows a pH-sensitive substrate specificity which may be ascribed to the protonation state of the binding site and leads to a stimulation of substrate transport in an acidic microenvironment. Hydrogencarbonate/HCO3(-) acts as the probable counteranion that exchanges for organic anions. May contribute to regulate the transport of organic compounds in testis across the blood-testis-barrier. The polypeptide is Solute carrier organic anion transporter family member 1A5 (Slco1a5) (Mus musculus (Mouse)).